Here is a 507-residue protein sequence, read N- to C-terminus: Nuclear distribution protein PAC1 (507 aa).

Residues 72–98 adopt a coiled-coil conformation; it reads STVLRLQRKIMDLTDEVSNLKTIIEAK. 7 WD repeats span residues 125–164, 170–222, 225–265, 268–312, 315–389, 410–449, and 474–507; these read QTHQ…PSIP, AHSR…QIRI, GHDH…CTRT, GHSD…GLCL, GHSH…VRPN, GHQS…TGGR, and PKDT…RLWS.

This sequence belongs to the WD repeat LIS1/nudF family. Self-associates. Interacts with NDL1 and dynein.

It localises to the cytoplasm. It is found in the cytoskeleton. The protein localises to the spindle pole. Positively regulates the activity of the minus-end directed microtubule motor protein dynein. Plays a central role in positioning the mitotic spindle at the bud neck during cell division. Targets cytoplasmic dynein to microtubule plus ends, thereby promoting dynein-mediated microtubule sliding along the bud cortex and consequently the movement of the mitotic spindle to the bud neck. The protein is Nuclear distribution protein PAC1 of Meyerozyma guilliermondii (strain ATCC 6260 / CBS 566 / DSM 6381 / JCM 1539 / NBRC 10279 / NRRL Y-324) (Yeast).